Consider the following 193-residue polypeptide: Probable nicotinate-nucleotide adenylyltransferase (193 aa).

Belongs to the NadD family.

The enzyme catalyses nicotinate beta-D-ribonucleotide + ATP + H(+) = deamido-NAD(+) + diphosphate. It functions in the pathway cofactor biosynthesis; NAD(+) biosynthesis; deamido-NAD(+) from nicotinate D-ribonucleotide: step 1/1. In terms of biological role, catalyzes the reversible adenylation of nicotinate mononucleotide (NaMN) to nicotinic acid adenine dinucleotide (NaAD). This chain is Probable nicotinate-nucleotide adenylyltransferase, found in Endomicrobium trichonymphae.